The chain runs to 104 residues: L-rhamnose mutarotase (104 aa).

Y18 lines the substrate pocket. H22 functions as the Proton donor in the catalytic mechanism. Substrate is bound by residues Y41 and 76–77 (WW).

It belongs to the rhamnose mutarotase family. As to quaternary structure, homodimer.

The protein localises to the cytoplasm. The catalysed reaction is alpha-L-rhamnose = beta-L-rhamnose. The protein operates within carbohydrate metabolism; L-rhamnose metabolism. Functionally, involved in the anomeric conversion of L-rhamnose. This chain is L-rhamnose mutarotase, found in Citrobacter koseri (strain ATCC BAA-895 / CDC 4225-83 / SGSC4696).